The sequence spans 351 residues: UDP-3-O-acylglucosamine N-acyltransferase (351 aa).

His257 acts as the Proton acceptor in catalysis.

It belongs to the transferase hexapeptide repeat family. LpxD subfamily. Homotrimer.

The enzyme catalyses a UDP-3-O-[(3R)-3-hydroxyacyl]-alpha-D-glucosamine + a (3R)-hydroxyacyl-[ACP] = a UDP-2-N,3-O-bis[(3R)-3-hydroxyacyl]-alpha-D-glucosamine + holo-[ACP] + H(+). It participates in bacterial outer membrane biogenesis; LPS lipid A biosynthesis. Functionally, catalyzes the N-acylation of UDP-3-O-acylglucosamine using 3-hydroxyacyl-ACP as the acyl donor. Is involved in the biosynthesis of lipid A, a phosphorylated glycolipid that anchors the lipopolysaccharide to the outer membrane of the cell. The chain is UDP-3-O-acylglucosamine N-acyltransferase from Methylorubrum populi (strain ATCC BAA-705 / NCIMB 13946 / BJ001) (Methylobacterium populi).